Here is a 135-residue protein sequence, read N- to C-terminus: T-cell receptor gamma chain V region 5/10-13 (135 aa).

The first 18 residues, 1–18 (MLLLRWPTFCCLWVFGLG), serve as a signal peptide directing secretion. The v segment stretch occupies residues 19-114 (QLEQTELSVT…DEATYYCAVC (96 aa)). The interval 115–135 (RSGTSWVKIFAKGTKLVVIPP) is j segment.

This Mus musculus (Mouse) protein is T-cell receptor gamma chain V region 5/10-13 (Tcrg-V1).